Consider the following 348-residue polypeptide: Dihydroorotase (348 aa).

Positions 17 and 19 each coordinate Zn(2+). Substrate contacts are provided by residues 19–21 (HLR) and N45. Positions 103, 140, and 178 each coordinate Zn(2+). K103 carries the post-translational modification N6-carboxylysine. H140 contacts substrate. Residue L223 coordinates substrate. D251 contacts Zn(2+). Residue D251 is part of the active site. Residues H255 and A267 each contribute to the substrate site.

This sequence belongs to the metallo-dependent hydrolases superfamily. DHOase family. Class II DHOase subfamily. Homodimer. Zn(2+) is required as a cofactor.

It carries out the reaction (S)-dihydroorotate + H2O = N-carbamoyl-L-aspartate + H(+). The protein operates within pyrimidine metabolism; UMP biosynthesis via de novo pathway; (S)-dihydroorotate from bicarbonate: step 3/3. In terms of biological role, catalyzes the reversible cyclization of carbamoyl aspartate to dihydroorotate. This chain is Dihydroorotase, found in Cronobacter sakazakii (strain ATCC BAA-894) (Enterobacter sakazakii).